Here is a 181-residue protein sequence, read N- to C-terminus: Translation initiation factor IF-3, chloroplastic (181 aa).

Belongs to the IF-3 family. As to quaternary structure, monomer.

It is found in the plastid. The protein resides in the chloroplast. Its function is as follows. IF-3 binds to the 30S ribosomal subunit and shifts the equilibrium between 70S ribosomes and their 50S and 30S subunits in favor of the free subunits, thus enhancing the availability of 30S subunits on which protein synthesis initiation begins. The polypeptide is Translation initiation factor IF-3, chloroplastic (Gracilaria tenuistipitata var. liui (Red alga)).